Consider the following 343-residue polypeptide: Glyceraldehyde-3-phosphate dehydrogenase (343 aa).

NAD(+) is bound by residues threonine 13 to isoleucine 14 and glycine 112. Serine 141–asparagine 143 is a binding site for D-glyceraldehyde 3-phosphate. The active-site Nucleophile is cysteine 142. Residue arginine 170 participates in NAD(+) binding. D-glyceraldehyde 3-phosphate is bound at residue histidine 196–alanine 197. Glutamine 303 provides a ligand contact to NAD(+).

It belongs to the glyceraldehyde-3-phosphate dehydrogenase family. As to quaternary structure, homotetramer.

It is found in the cytoplasm. The enzyme catalyses D-glyceraldehyde 3-phosphate + phosphate + NADP(+) = (2R)-3-phospho-glyceroyl phosphate + NADPH + H(+). The catalysed reaction is D-glyceraldehyde 3-phosphate + phosphate + NAD(+) = (2R)-3-phospho-glyceroyl phosphate + NADH + H(+). The protein operates within carbohydrate degradation; glycolysis; pyruvate from D-glyceraldehyde 3-phosphate: step 1/5. The chain is Glyceraldehyde-3-phosphate dehydrogenase (gap) from Aeropyrum pernix (strain ATCC 700893 / DSM 11879 / JCM 9820 / NBRC 100138 / K1).